The following is a 140-amino-acid chain: L-fucose mutarotase (140 aa).

Catalysis depends on His-22, which acts as the Proton donor. Substrate is bound by residues Asp-30, Arg-107, and 129–131 (YGN).

Belongs to the RbsD / FucU family. FucU mutarotase subfamily. As to quaternary structure, homodecamer.

Its subcellular location is the cytoplasm. The catalysed reaction is alpha-L-fucose = beta-L-fucose. It functions in the pathway carbohydrate metabolism; L-fucose metabolism. Functionally, involved in the anomeric conversion of L-fucose. This is L-fucose mutarotase from Salmonella typhimurium (strain LT2 / SGSC1412 / ATCC 700720).